We begin with the raw amino-acid sequence, 593 residues long: Methionine--tRNA ligase, mitochondrial (593 aa).

The N-terminal 29 residues, 1-29 (MLRTSVLRLLGRTGASRLSLLEDFGPRYY), are a transit peptide targeting the mitochondrion. The short motif at 52–62 (FYVNAAPHIGH) is the 'HIGH' region element. The 'KMSKS' region motif lies at 347 to 351 (KMSKS). Lysine 350 is a binding site for ATP.

The protein belongs to the class-I aminoacyl-tRNA synthetase family.

The protein resides in the mitochondrion matrix. The enzyme catalyses tRNA(Met) + L-methionine + ATP = L-methionyl-tRNA(Met) + AMP + diphosphate. In Homo sapiens (Human), this protein is Methionine--tRNA ligase, mitochondrial (MARS2).